The following is a 389-amino-acid chain: UDP-GlcNAc:betaGal beta-1,3-N-acetylglucosaminyltransferase 8 (389 aa).

Residues 1-7 (MRCRKCQ) lie on the Cytoplasmic side of the membrane. Residues 8–24 (LCLSALLTLLGLKVYIE) traverse the membrane as a helical; Signal-anchor for type II membrane protein segment. Over 25 to 389 (WTSESWLKKA…RHLWVPELQC (365 aa)) the chain is Lumenal. The tract at residues 36–57 (PRGALPSPTPPNAEPTLPTNLS) is disordered. N-linked (GlcNAc...) asparagine glycosylation is found at Asn-55 and Asn-212.

The protein belongs to the glycosyltransferase 31 family. Interacts with B3GNT2; this interaction greatly increases B3GNT2 catalytic activity, independently of B3GNT8 enzymatic activity.

The protein resides in the golgi apparatus membrane. The protein operates within protein modification; protein glycosylation. Its function is as follows. Beta-1,3-N-acetylglucosaminyltransferase that plays a role in the elongation of specific branch structures of multiantennary N-glycans. Has strong activity towards tetraantennary N-glycans and 2,6 triantennary glycans. The polypeptide is UDP-GlcNAc:betaGal beta-1,3-N-acetylglucosaminyltransferase 8 (Mus musculus (Mouse)).